Consider the following 244-residue polypeptide: Tetraspanin-1 (244 aa).

4 consecutive transmembrane segments (helical) span residues 11-31, 67-87, 104-124, and 198-218; these read VLFFLDLAMLLAALALIAVGF, LIVVFWSIIGLSLGAVVTAVL, YLVLIIVLVSLEIGCGVAVLV, and ILLVILILQTIAIILPVPILI.

It belongs to the tetraspanin (TM4SF) family.

It is found in the membrane. This Caenorhabditis elegans protein is Tetraspanin-1 (tsp-1).